Consider the following 232-residue polypeptide: Ribonuclease 3 (232 aa).

Residues 5–134 (QTVLKNHFEI…FLGALLLDKD (130 aa)) enclose the RNase III domain. A Mg(2+)-binding site is contributed by glutamate 47. The active site involves aspartate 51. Positions 120 and 123 each coordinate Mg(2+). Residue glutamate 123 is part of the active site. Positions 160–229 (DYKTHLQELL…AKNAVEKGLD (70 aa)) constitute a DRBM domain.

It belongs to the ribonuclease III family. As to quaternary structure, homodimer. Mg(2+) is required as a cofactor.

The protein resides in the cytoplasm. The enzyme catalyses Endonucleolytic cleavage to 5'-phosphomonoester.. Functionally, digests double-stranded RNA. Involved in the processing of primary rRNA transcript to yield the immediate precursors to the large and small rRNAs (23S and 16S). Processes some mRNAs, and tRNAs when they are encoded in the rRNA operon. Processes pre-crRNA and tracrRNA of type II CRISPR loci if present in the organism. In Streptococcus pneumoniae (strain ATCC BAA-255 / R6), this protein is Ribonuclease 3.